Here is a 425-residue protein sequence, read N- to C-terminus: Pectate lyase L (425 aa).

Positions 1-25 (MKYLNCFISTGLAAFFLVNSTSVLA) are cleaved as a signal peptide. Cys-28 and Cys-114 form a disulfide bridge. Residues Asp-209, Asp-233, Asp-234, and Asp-237 each contribute to the Ca(2+) site. The active-site Proton acceptor is the Lys-273. Residues Asn-402, Ser-413, Ala-416, Asp-418, and Glu-423 each contribute to the Ca(2+) site.

This sequence belongs to the polysaccharide lyase 9 family. Ca(2+) serves as cofactor.

Its subcellular location is the secreted. It catalyses the reaction Eliminative cleavage of (1-&gt;4)-alpha-D-galacturonan to give oligosaccharides with 4-deoxy-alpha-D-galact-4-enuronosyl groups at their non-reducing ends.. The protein operates within glycan metabolism; pectin degradation; 2-dehydro-3-deoxy-D-gluconate from pectin: step 2/5. Presents an endo-cleaving activity on polygalacturonate or partially methylated pectin. Is effective in the maceration of plant tissue, and has an important role in soft-rot disease. Is 280-fold less active against polygalacturonate than the major pectate lyase PelB. When assayed on polygalacturonate, PelL releases oligogalacturonates of different sizes; upon prolonged incubation, PelL degrades the primary products to unsaturated tetramer and pentamer in addition to unsaturated dimer and trimer. When assayed on oligogalacturonates (degrees of polymerization of 2 to 8), it preferentially forms unsaturated tetramer, and displays the highest activity on the octamer. This chain is Pectate lyase L (pelL), found in Dickeya dadantii (strain 3937) (Erwinia chrysanthemi (strain 3937)).